A 455-amino-acid polypeptide reads, in one-letter code: Ribosome biogenesis protein NOP53 (455 aa).

A compositionally biased stretch (polar residues) spans 1–15; that stretch reads MAPTNLTKKPSQYKQ. The disordered stretch occupies residues 1–25; it reads MAPTNLTKKPSQYKQSSRKGKKAWR. A compositionally biased stretch (basic residues) spans 16-25; that stretch reads SSRKGKKAWR. Residue S31 is modified to Phosphoserine. The segment at 264–333 is disordered; that stretch reads HLMETLDDNE…RNKAKRHEEK (70 aa). Over residues 268–294 the composition is skewed to acidic residues; the sequence is TLDDNEEEESSSNEEEEEEEEENENEN. Residues 314-328 show a composition bias toward basic residues; that stretch reads VKNKKKTKYQRNKAK.

Belongs to the NOP53 family. In terms of assembly, interacts with CBF5, FPR3, FPR4, NOP2, PIH1, RRN3, RRP6 and PAP2. Interacts with pre-60S ribosomal particles.

It localises to the nucleus. The protein resides in the nucleolus. The protein localises to the nucleoplasm. In terms of biological role, late-acting factor in the nuclear maturation of 60S ribosomal subunits, which is required for normal acquisition of export competence. Required for the export of the large subunit. Acts to stimulate the RNase activity of the exosome complex, and may recruit the exosome to 7S pre-rRNA for processing. Associates with numerous RNAs including the 27S and 7S pre-rRNAs and the box H/ACA snoRNA snR37. Also interacts (via N-terminal region) with the mature 25S rRNA and the mature 5.8S rRNA. The chain is Ribosome biogenesis protein NOP53 from Saccharomyces cerevisiae (strain ATCC 204508 / S288c) (Baker's yeast).